Consider the following 617-residue polypeptide: UvrABC system protein C (617 aa).

In terms of domain architecture, GIY-YIG spans 22–100 (KLPGVYRFFD…IKALSPKYNI (79 aa)). The 36-residue stretch at 209–244 (DELTRTLQHKMQTAAANLQFEEAARYRDQIQALGII) folds into the UVR domain.

Belongs to the UvrC family. In terms of assembly, interacts with UvrB in an incision complex.

The protein localises to the cytoplasm. In terms of biological role, the UvrABC repair system catalyzes the recognition and processing of DNA lesions. UvrC both incises the 5' and 3' sides of the lesion. The N-terminal half is responsible for the 3' incision and the C-terminal half is responsible for the 5' incision. The chain is UvrABC system protein C from Neisseria gonorrhoeae (strain ATCC 700825 / FA 1090).